A 140-amino-acid chain; its full sequence is Small ribosomal subunit protein uS12 (140 aa).

Aspartate 102 is subject to 3-methylthioaspartic acid. The disordered stretch occupies residues 121-140; the sequence is ANRQQSRSKYGAKKPKAAKK. Basic residues predominate over residues 130 to 140; that stretch reads YGAKKPKAAKK.

Belongs to the universal ribosomal protein uS12 family. In terms of assembly, part of the 30S ribosomal subunit. Contacts proteins S8 and S17. May interact with IF1 in the 30S initiation complex.

Functionally, with S4 and S5 plays an important role in translational accuracy. In terms of biological role, interacts with and stabilizes bases of the 16S rRNA that are involved in tRNA selection in the A site and with the mRNA backbone. Located at the interface of the 30S and 50S subunits, it traverses the body of the 30S subunit contacting proteins on the other side and probably holding the rRNA structure together. The combined cluster of proteins S8, S12 and S17 appears to hold together the shoulder and platform of the 30S subunit. This is Small ribosomal subunit protein uS12 from Alkaliphilus oremlandii (strain OhILAs) (Clostridium oremlandii (strain OhILAs)).